We begin with the raw amino-acid sequence, 223 residues long: Urease accessory protein UreG (223 aa).

Positions 1–30 (MAKHSHDHTHDHHDRPRRVRKPGEPLRIGV) are disordered. Residue 32–39 (GPVGSGKT) participates in GTP binding.

It belongs to the SIMIBI class G3E GTPase family. UreG subfamily. In terms of assembly, homodimer. UreD, UreF and UreG form a complex that acts as a GTP-hydrolysis-dependent molecular chaperone, activating the urease apoprotein by helping to assemble the nickel containing metallocenter of UreC. The UreE protein probably delivers the nickel.

The protein localises to the cytoplasm. Functionally, facilitates the functional incorporation of the urease nickel metallocenter. This process requires GTP hydrolysis, probably effectuated by UreG. The chain is Urease accessory protein UreG from Mycobacterium ulcerans (strain Agy99).